Here is a 309-residue protein sequence, read N- to C-terminus: MNLNLLPDLALFVQIVDQGSFSAVARQNGITPSAVSRSVSRLEREMGCKLLQRTTRKLRLSDAGETIYQHAQQMLEAARQAMDSAGSRQTVAQGKLTLSVPKAVGRFVIHPLMMAFFHRYPQVDVCLRLEDRPLDFIDDGIDLALRITDTPSPGLHGKPLMPIRHVICATEAYLQQHGTPYTPQDLRAHSCISLGETPADARWKFRREGKTETVQTYGRYAANHTAVRLDAVRQHLGIGSLPLFTAREALANGDIVQVLPEWEFISSYSGDLWLLWAGDKHMPARMRAMIDYLSETVPALNAGSTEPAK.

One can recognise an HTH lysR-type domain in the interval 1–61; it reads MNLNLLPDLA…QRTTRKLRLS (61 aa). Positions 21–40 form a DNA-binding region, H-T-H motif; sequence FSAVARQNGITPSAVSRSVS.

The protein belongs to the LysR transcriptional regulatory family.

The chain is Probable HTH-type transcriptional regulator LtrA (ltrA) from Klebsiella pneumoniae.